A 262-amino-acid polypeptide reads, in one-letter code: Acyl-[acyl-carrier-protein]--UDP-N-acetylglucosamine O-acyltransferase (262 aa).

The protein belongs to the transferase hexapeptide repeat family. LpxA subfamily. Homotrimer.

Its subcellular location is the cytoplasm. The catalysed reaction is a (3R)-hydroxyacyl-[ACP] + UDP-N-acetyl-alpha-D-glucosamine = a UDP-3-O-[(3R)-3-hydroxyacyl]-N-acetyl-alpha-D-glucosamine + holo-[ACP]. It functions in the pathway glycolipid biosynthesis; lipid IV(A) biosynthesis; lipid IV(A) from (3R)-3-hydroxytetradecanoyl-[acyl-carrier-protein] and UDP-N-acetyl-alpha-D-glucosamine: step 1/6. Functionally, involved in the biosynthesis of lipid A, a phosphorylated glycolipid that anchors the lipopolysaccharide to the outer membrane of the cell. In Vibrio atlanticus (strain LGP32) (Vibrio splendidus (strain Mel32)), this protein is Acyl-[acyl-carrier-protein]--UDP-N-acetylglucosamine O-acyltransferase.